We begin with the raw amino-acid sequence, 456 residues long: Glutamate--tRNA ligase 1 (456 aa).

Residues 9-19 carry the 'HIGH' region motif; the sequence is PSPTGQIHIGN. A 'KMSKS' region motif is present at residues 250–254; the sequence is GLSKR. Position 253 (K253) interacts with ATP.

This sequence belongs to the class-I aminoacyl-tRNA synthetase family. Glutamate--tRNA ligase type 1 subfamily. As to quaternary structure, monomer.

It is found in the cytoplasm. It carries out the reaction tRNA(Glu) + L-glutamate + ATP = L-glutamyl-tRNA(Glu) + AMP + diphosphate. In terms of biological role, catalyzes the attachment of glutamate to tRNA(Glu) in a two-step reaction: glutamate is first activated by ATP to form Glu-AMP and then transferred to the acceptor end of tRNA(Glu). The protein is Glutamate--tRNA ligase 1 of Chelativorans sp. (strain BNC1).